A 301-amino-acid polypeptide reads, in one-letter code: Glycine--tRNA ligase alpha subunit (301 aa).

It belongs to the class-II aminoacyl-tRNA synthetase family. As to quaternary structure, tetramer of two alpha and two beta subunits.

Its subcellular location is the cytoplasm. The catalysed reaction is tRNA(Gly) + glycine + ATP = glycyl-tRNA(Gly) + AMP + diphosphate. The polypeptide is Glycine--tRNA ligase alpha subunit (Shewanella baltica (strain OS223)).